Reading from the N-terminus, the 346-residue chain is MCEGPSRISGPIPPDPTLCPDYYRRPASAQGRLEGNALKLDLLTSGRDLDSSPPRGPRIRPEAREILERGQRGVGDVLLQLGCISLGSGVSPKRKNPKDHEKENLRRIKEIQRRFQDQERSREQGQPKPLKALWRSPKYDNVESRVKARMKELGPTSVTEPAHFLRAHSRCGPGLPPSRASSPQLALPGPQAKGPGLGVDFISRNALAAKRAPRRHSRSLQVLAQVQEQQRQAQERYNATQKGHVPHYLLERRDLWRKEAEARQRSQPDPSMPPGHTLMPENQRLETLNNLLQSQSQLLRELVLLPAGADSLRAQGHRAELDRKLVQIEEAIKIFSRPKVFVKMDT.

Disordered stretches follow at residues 1-24 (MCEG…DYYR), 88-107 (SGVS…NLRR), and 113-132 (RRFQ…PLKA). Residue serine 91 is modified to Phosphoserine. Basic and acidic residues-rich tracts occupy residues 98-107 (KDHEKENLRR) and 113-125 (RRFQ…REQG). Serine 136 is subject to Phosphoserine. Positions 251-343 (ERRDLWRKEA…IFSRPKVFVK (93 aa)) constitute an Enkurin domain. A disordered region spans residues 259–280 (EAEARQRSQPDPSMPPGHTLMP).

As to quaternary structure, interacts with alpha-tubulin. Interacts (via central region) with CCP110 (via N-terminal region); competes with CEP97 for binding to CCP110. In terms of tissue distribution, widely expressed with highest levels in testis and lung.

Its subcellular location is the cytoplasm. It localises to the cytoskeleton. The protein localises to the microtubule organizing center. It is found in the centrosome. The protein resides in the centriole. Its subcellular location is the cilium basal body. It localises to the cell projection. The protein localises to the cilium. It is found in the spindle. The protein resides in the spindle pole. Its subcellular location is the cilium axoneme. Its function is as follows. Microtubule-binding protein which regulates microtubule organization and stability. Promotes the stability of astral microtubules and facilitates the proper orientation of the mitotic spindle. This allows the oriented division of basal keratinocytes and contributes to epidermal stratification. Required for the assembly of both primary and motile cilia. Destabilizes the interaction between CCP110 and CEP97 by competing with CEP97 for binding to CCP110 which promotes the removal of CCP110 and CEP97 from the mother centriole and allows the initiation of ciliogenesis. In Mus musculus (Mouse), this protein is Enkurin domain-containing protein 1 (Enkd1).